The following is a 65-amino-acid chain: 7 kDa A-type inclusion protein (65 aa).

A compositionally biased stretch (polar residues) spans 1-20 (MSNQNIPQLSEYQTSVSQVA). The disordered stretch occupies residues 1–32 (MSNQNIPQLSEYQTSVSQVAVTPPPKPKTPQI).

The polypeptide is 7 kDa A-type inclusion protein (Bos taurus (Bovine)).